The primary structure comprises 399 residues: Sister chromatid cohesion protein DCC1 (399 aa).

It belongs to the DCC1 family. As to quaternary structure, component of the CTF18-RFC complex which consists of CTF8, CTF18, DSCC1 and the RFC complex. Interacts with CTF8 and CTF18. Interacts with DDX11.

Its subcellular location is the nucleus. In terms of biological role, loads PCNA onto primed templates regulating velocity, spacing and restart activity of replication forks. May couple DNA replication to sister chromatid cohesion through regulation of the acetylation of the cohesin subunit SMC3. In Mus musculus (Mouse), this protein is Sister chromatid cohesion protein DCC1 (DSCC1).